Here is a 101-residue protein sequence, read N- to C-terminus: Putative pterin-4-alpha-carbinolamine dehydratase (101 aa).

This sequence belongs to the pterin-4-alpha-carbinolamine dehydratase family.

It carries out the reaction (4aS,6R)-4a-hydroxy-L-erythro-5,6,7,8-tetrahydrobiopterin = (6R)-L-erythro-6,7-dihydrobiopterin + H2O. This Streptomyces coelicolor (strain ATCC BAA-471 / A3(2) / M145) protein is Putative pterin-4-alpha-carbinolamine dehydratase.